Consider the following 439-residue polypeptide: Oocyte zinc finger protein XlCOF28 (439 aa).

9 C2H2-type zinc fingers span residues 6 to 28, 34 to 56, 62 to 84, 90 to 112, 118 to 140, 146 to 168, 174 to 196, 202 to 224, and 230 to 252; these read YECTECEKTFSNQSVLSLHQRTH, FKCTECEKSFMKRSQLIVHKKCH, YMCTFCEKGYNQHSKLIEHIRTH, FTCTECKKSFTKRCNLTEHLRIH, HKCNLCDKTFHYPSNLVEHQRTH, FQCTECDKSFIKMSKLMVHLRIH, YKCSECDKSFSQQSTLVVHQRTH, FQCSHCEKSFSYHYAFVVHERTH, and YKCSMCDKAYSQRSNLKLHQKTH. Disordered regions lie at residues 246-275 and 285-304; these read KLHQKTHESKPQQDSPNCEKTFEQESAPKT and AGLEKVPELPEATNSVESPE. 4 C2H2-type zinc fingers span residues 333 to 355, 361 to 383, 389 to 411, and 417 to 439; these read HKCTECDKCFLEKSKLVVHQRTH, FKCSVCDKTFIRMVHLLEHRKIH, YTCAECGKSFIRMSKLTVHRRTH, and YICAECGKQFSQQSNLVVHQRIH.

This sequence belongs to the krueppel C2H2-type zinc-finger protein family.

The protein localises to the nucleus. In terms of biological role, may be involved in transcriptional regulation. This chain is Oocyte zinc finger protein XlCOF28, found in Xenopus laevis (African clawed frog).